A 360-amino-acid chain; its full sequence is Peptide chain release factor 1 (360 aa).

Gln-235 carries the post-translational modification N5-methylglutamine.

It belongs to the prokaryotic/mitochondrial release factor family. Post-translationally, methylated by PrmC. Methylation increases the termination efficiency of RF1.

It localises to the cytoplasm. Its function is as follows. Peptide chain release factor 1 directs the termination of translation in response to the peptide chain termination codons UAG and UAA. The protein is Peptide chain release factor 1 of Mannheimia succiniciproducens (strain KCTC 0769BP / MBEL55E).